We begin with the raw amino-acid sequence, 252 residues long: Imidazole glycerol phosphate synthase subunit HisF (252 aa).

Active-site residues include Asp11 and Asp130.

Belongs to the HisA/HisF family. Heterodimer of HisH and HisF.

It localises to the cytoplasm. It carries out the reaction 5-[(5-phospho-1-deoxy-D-ribulos-1-ylimino)methylamino]-1-(5-phospho-beta-D-ribosyl)imidazole-4-carboxamide + L-glutamine = D-erythro-1-(imidazol-4-yl)glycerol 3-phosphate + 5-amino-1-(5-phospho-beta-D-ribosyl)imidazole-4-carboxamide + L-glutamate + H(+). The protein operates within amino-acid biosynthesis; L-histidine biosynthesis; L-histidine from 5-phospho-alpha-D-ribose 1-diphosphate: step 5/9. IGPS catalyzes the conversion of PRFAR and glutamine to IGP, AICAR and glutamate. The HisF subunit catalyzes the cyclization activity that produces IGP and AICAR from PRFAR using the ammonia provided by the HisH subunit. The protein is Imidazole glycerol phosphate synthase subunit HisF of Desulforudis audaxviator (strain MP104C).